The primary structure comprises 505 residues: Ent-kaurene oxidase 2 (505 aa).

A helical transmembrane segment spans residues Ala3–Ala23. Position 449 (Cys449) interacts with heme.

This sequence belongs to the cytochrome P450 family. Heme serves as cofactor. As to expression, widely expressed.

The protein resides in the membrane. It catalyses the reaction ent-kaur-16-ene + 3 reduced [NADPH--hemoprotein reductase] + 3 O2 = ent-kaur-16-en-19-oate + 3 oxidized [NADPH--hemoprotein reductase] + 4 H2O + 4 H(+). Its pathway is plant hormone biosynthesis; gibberellin biosynthesis. Functionally, catalyzes three successive oxidations of the 4-methyl group of ent-kaurene giving kaurenoic acid, a key step in gibberellins (GAs) biosynthesis. GAs, which are involved many processes, including stem elongation, play a central role in plant development. This chain is Ent-kaurene oxidase 2, found in Oryza sativa subsp. japonica (Rice).